The following is a 361-amino-acid chain: S-adenosylmethionine:tRNA ribosyltransferase-isomerase (361 aa).

It belongs to the QueA family. In terms of assembly, monomer.

Its subcellular location is the cytoplasm. The catalysed reaction is 7-aminomethyl-7-carbaguanosine(34) in tRNA + S-adenosyl-L-methionine = epoxyqueuosine(34) in tRNA + adenine + L-methionine + 2 H(+). It functions in the pathway tRNA modification; tRNA-queuosine biosynthesis. Functionally, transfers and isomerizes the ribose moiety from AdoMet to the 7-aminomethyl group of 7-deazaguanine (preQ1-tRNA) to give epoxyqueuosine (oQ-tRNA). This chain is S-adenosylmethionine:tRNA ribosyltransferase-isomerase, found in Rhizobium etli (strain ATCC 51251 / DSM 11541 / JCM 21823 / NBRC 15573 / CFN 42).